The sequence spans 308 residues: GTP-binding protein RAD (308 aa).

Gly residues predominate over residues 1–16 (MTLNGGGSGAGGSRGG). A disordered region spans residues 1–88 (MTLNGGGSGA…SLSSGGSDSD (88 aa)). An Omega-N-methylarginine modification is found at Arg-24. Ser-26 is subject to Phosphoserine. Over residues 48–68 (QAALTPGALTAAAAGTGTQGP) the composition is skewed to low complexity. GTP contacts are provided by residues 98–105 (GAPGVGKS) and 203–206 (NKSD). A calmodulin-binding region spans residues 278–297 (AKRFLGRIVARNSRKMAFRA).

Belongs to the small GTPase superfamily. RGK family. Interacts with calmodulin preferentially in the inactive, GDP-bound form. Binds CAMKII which is capable of phosphorylating RAD in vitro. Interacts with CAMK2D. Interacts with CACNB2; interaction may be involved in beta-adrenergic regulation of heart rate and contractile force. Interaction with CACNB2 regulates the trafficking of CACNA1C to the cell membrane. Most abundantly expressed in the heart. Also found in the skeletal muscle and lung. Lesser amounts in placenta and kidney. Also detected in adipose tissue. Overexpressed in muscle of type II diabetic humans.

It localises to the cell membrane. In terms of biological role, may regulate basal voltage-dependent L-type Ca(2+) currents and be required for beta-adrenergic augmentation of Ca(2+) influx in cardiomyocytes, thereby regulating increases in heart rate and contractile force. May play an important role in cardiac antiarrhythmia via the strong suppression of voltage-gated L-type Ca(2+) currents. Regulates voltage-dependent L-type calcium channel subunit alpha-1C trafficking to the cell membrane. Inhibits cardiac hypertrophy through the calmodulin-dependent kinase II (CaMKII) pathway. Inhibits phosphorylation and activation of CAMK2D. The chain is GTP-binding protein RAD (RRAD) from Homo sapiens (Human).